Consider the following 107-residue polypeptide: UPF0145 protein MAB_3451c (107 aa).

It belongs to the UPF0145 family.

This Mycobacteroides abscessus (strain ATCC 19977 / DSM 44196 / CCUG 20993 / CIP 104536 / JCM 13569 / NCTC 13031 / TMC 1543 / L948) (Mycobacterium abscessus) protein is UPF0145 protein MAB_3451c.